We begin with the raw amino-acid sequence, 146 residues long: Stress enhanced protein 1, chloroplastic (146 aa).

The N-terminal 73 residues, 1–73, are a transit peptide targeting the chloroplast; it reads MALSQVSASL…GNRAASVSIR (73 aa). Helical transmembrane passes span 84 to 104 and 120 to 140; these read LDIW…TVEI and LPTV…VFIF.

The protein belongs to the ELIP/psbS family.

It is found in the plastid. Its subcellular location is the chloroplast thylakoid membrane. In terms of biological role, may be involved in non-photochemical quenching, a process that maintains the balance between dissipation and utilization of light energy to minimize generation of oxidizing molecules, thereby protecting the plant against photo-oxidative damage. May play a photoprotective role in the thylakoid membrane in response to light stress. The sequence is that of Stress enhanced protein 1, chloroplastic from Arabidopsis thaliana (Mouse-ear cress).